A 185-amino-acid polypeptide reads, in one-letter code: Ribosome-recycling factor (185 aa).

This sequence belongs to the RRF family.

Its subcellular location is the cytoplasm. Responsible for the release of ribosomes from messenger RNA at the termination of protein biosynthesis. May increase the efficiency of translation by recycling ribosomes from one round of translation to another. The polypeptide is Ribosome-recycling factor (Yersinia enterocolitica serotype O:8 / biotype 1B (strain NCTC 13174 / 8081)).